Here is a 375-residue protein sequence, read N- to C-terminus: Delta(9) fatty acid conjugase-like enzyme (375 aa).

The next 2 helical transmembrane spans lie at 38–58 and 66–86; these read LSLS…LFYV and LPYS…GAFL. The Histidine box-1 motif lies at 94-98; it reads HECGH. Residues 130–134 carry the Histidine box-2 motif; that stretch reads HRNHH. The next 3 membrane-spanning stretches (helical) occupy residues 168 to 188, 219 to 239, and 241 to 261; these read FGLV…YLIF, VFFS…IAIA, and GAML…AFIF. Positions 307–311 match the Histidine box-3 motif; it reads HVVHH.

Belongs to the fatty acid desaturase type 1 family.

The protein localises to the membrane. Functionally, involved in the biosynthesis of dimorphecolic acid (9-OH-18:2(10E,12E)). Catalyzes the formation of the C-9 hydroxyl group and the (E)-delta(10) double bond from the trans-linoleic acid (16:2(9Z,12E)) produced by FAD2-1. Very limited activity with cis-linoleic acid (16:2(9Z,12Z)). In Dimorphotheca sinuata (African daisy), this protein is Delta(9) fatty acid conjugase-like enzyme.